We begin with the raw amino-acid sequence, 31 residues long: Photosystem II reaction center protein T (31 aa).

The helical transmembrane segment at 3 to 23 (ALVYTFLLVGTLGIIFFSIFF) threads the bilayer.

It belongs to the PsbT family. As to quaternary structure, PSII is composed of 1 copy each of membrane proteins PsbA, PsbB, PsbC, PsbD, PsbE, PsbF, PsbH, PsbI, PsbJ, PsbK, PsbL, PsbM, PsbT, PsbY, PsbZ, Psb30/Ycf12, at least 3 peripheral proteins of the oxygen-evolving complex and a large number of cofactors. It forms dimeric complexes.

It localises to the plastid. The protein localises to the chloroplast thylakoid membrane. Functionally, found at the monomer-monomer interface of the photosystem II (PS II) dimer, plays a role in assembly and dimerization of PSII. PSII is a light-driven water plastoquinone oxidoreductase, using light energy to abstract electrons from H(2)O, generating a proton gradient subsequently used for ATP formation. This chain is Photosystem II reaction center protein T, found in Chlamydomonas reinhardtii (Chlamydomonas smithii).